The primary structure comprises 411 residues: Translation initiation factor 2 subunit gamma (411 aa).

The 195-residue stretch at 9-203 folds into the tr-type G domain; that stretch reads QAEVNIGMVG…AIQDFIPTPK (195 aa). Residues 18–25 are G1; it reads GHVDHGKT. Residues Asp-21, Thr-25, Gly-46, and Ser-48 each contribute to the Mg(2+) site. 21 to 26 is a GTP binding site; the sequence is DHGKTS. Positions 46–50 are G2; sequence GISIR. Positions 61, 64, 73, and 76 each coordinate Zn(2+). A G3 region spans residues 90 to 93; sequence DSPG. Residues 146–149 and 181–183 each bind GTP; these read NKID and SAH. The tract at residues 146–149 is G4; the sequence is NKID. The G5 stretch occupies residues 181–183; the sequence is SAH.

It belongs to the TRAFAC class translation factor GTPase superfamily. Classic translation factor GTPase family. EIF2G subfamily. As to quaternary structure, heterotrimer composed of an alpha, a beta and a gamma chain. Requires Mg(2+) as cofactor.

The catalysed reaction is GTP + H2O = GDP + phosphate + H(+). Its function is as follows. eIF-2 functions in the early steps of protein synthesis by forming a ternary complex with GTP and initiator tRNA. The polypeptide is Translation initiation factor 2 subunit gamma (Methanocaldococcus jannaschii (strain ATCC 43067 / DSM 2661 / JAL-1 / JCM 10045 / NBRC 100440) (Methanococcus jannaschii)).